A 239-amino-acid polypeptide reads, in one-letter code: Ribonuclease HII (239 aa).

The RNase H type-2 domain maps to 30–221 (GPVAGVDEVG…VRRLVTAGTP (192 aa)). Residues D36, E37, and D130 each contribute to the a divalent metal cation site.

This sequence belongs to the RNase HII family. Requires Mn(2+) as cofactor. Mg(2+) serves as cofactor.

The protein localises to the cytoplasm. It carries out the reaction Endonucleolytic cleavage to 5'-phosphomonoester.. Endonuclease that specifically degrades the RNA of RNA-DNA hybrids. In Mycobacterium sp. (strain KMS), this protein is Ribonuclease HII.